The chain runs to 457 residues: tRNA-2-methylthio-N(6)-dimethylallyladenosine synthase (457 aa).

An MTTase N-terminal domain is found at 3-120; sequence KKVYVKTFGC…LPQMIDARRE (118 aa). Residues cysteine 12, cysteine 49, cysteine 83, cysteine 157, cysteine 161, and cysteine 164 each contribute to the [4Fe-4S] cluster site. The Radical SAM core domain maps to 143–377; that stretch reads RVEGPSAFVS…QATIEENVAR (235 aa). The TRAM domain maps to 380-447; the sequence is QSMVGKVERI…PHSLRGELVL (68 aa).

The protein belongs to the methylthiotransferase family. MiaB subfamily. In terms of assembly, monomer. The cofactor is [4Fe-4S] cluster.

It is found in the cytoplasm. The enzyme catalyses N(6)-dimethylallyladenosine(37) in tRNA + (sulfur carrier)-SH + AH2 + 2 S-adenosyl-L-methionine = 2-methylsulfanyl-N(6)-dimethylallyladenosine(37) in tRNA + (sulfur carrier)-H + 5'-deoxyadenosine + L-methionine + A + S-adenosyl-L-homocysteine + 2 H(+). Catalyzes the methylthiolation of N6-(dimethylallyl)adenosine (i(6)A), leading to the formation of 2-methylthio-N6-(dimethylallyl)adenosine (ms(2)i(6)A) at position 37 in tRNAs that read codons beginning with uridine. The polypeptide is tRNA-2-methylthio-N(6)-dimethylallyladenosine synthase (Burkholderia lata (strain ATCC 17760 / DSM 23089 / LMG 22485 / NCIMB 9086 / R18194 / 383)).